The sequence spans 135 residues: Protein E6 (135 aa).

Zinc fingers lie at residues 23-59 and 96-132; these read CTFC…CTAC and CRVC…CRIC.

The protein belongs to the papillomaviridae E6 protein family. As to quaternary structure, forms homodimers. Interacts with ubiquitin-protein ligase UBE3A/E6-AP; this interaction stimulates UBE3A ubiquitin activity. Interacts with host BAK1.

The protein resides in the host cytoplasm. It localises to the host nucleus. In terms of biological role, plays a major role in the induction and maintenance of cellular transformation. E6 associates with host UBE3A/E6-AP ubiquitin-protein ligase and modulates its activity. Protects host keratinocytes from apoptosis by mediating the degradation of host BAK1. May also inhibit host immune response. The polypeptide is Protein E6 (Mastomys natalensis papillomavirus (isolate African multimammate rat) (MnPV)).